Here is a 263-residue protein sequence, read N- to C-terminus: MARSYAERANTHQSPVARRLFALMEQKQSNLCASVDVRTTKELLELLDKLGPFICLAKTHIDIIDDFTYDGTILPLLELSKKHKFLIFEDRKFADIGNTVKHQYQGGVYKIAQWADITNAHGVIGSGIVKGLKEAATETTDQPRGLLMLAELSSKGSIAHGKYTEETVEIAKSDKEFVIGFIAQNSMGGQDEGFDWIIMTPGVGLDDTGDALGQQYRTVSQVFSTGTDIIIVGRGLFGKGRDPLKEGERYRKAGWEAYQNILR.

Substrate contacts are provided by residues aspartate 36, 58–60 (KTH), 90–99 (DRKFADIGNT), tyrosine 216, and arginine 234. Catalysis depends on lysine 92, which acts as the Proton donor.

It belongs to the OMP decarboxylase family.

It catalyses the reaction orotidine 5'-phosphate + H(+) = UMP + CO2. Its pathway is pyrimidine metabolism; UMP biosynthesis via de novo pathway; UMP from orotate: step 2/2. The sequence is that of Orotidine 5'-phosphate decarboxylase (URA3) from Komagataella pastoris (Yeast).